The primary structure comprises 179 residues: Protein PLASTID REDOX INSENSITIVE 2, chloroplastic (179 aa).

Residues 1–69 (MASMHEALFS…SLSRRGFVCR (69 aa)) constitute a chloroplast transit peptide.

In terms of assembly, binds DNA when in complex with CSP41b.

The protein resides in the plastid. Its subcellular location is the chloroplast stroma. It is found in the chloroplast nucleoid. Involved in redox-mediated retrograde signaling to synchronize the expression of photosynthetic genes from both the nuclear and plastidic genomes, especially in excess light conditions. Required for full expression of genes transcribed by the plastid-encoded RNA polymerase (PEP). Essential for embryo development. This is Protein PLASTID REDOX INSENSITIVE 2, chloroplastic from Arabidopsis thaliana (Mouse-ear cress).